A 699-amino-acid chain; its full sequence is DNA ligase (699 aa).

The disordered stretch occupies residues M1–R20. NAD(+) contacts are provided by residues D43–D47, S92–L93, and E126. K128 acts as the N6-AMP-lysine intermediate in catalysis. NAD(+) is bound by residues R149, E185, K301, and K325. Zn(2+) is bound by residues C419, C422, C443, and C449. The BRCT domain occupies A621–E699.

This sequence belongs to the NAD-dependent DNA ligase family. LigA subfamily. Mg(2+) is required as a cofactor. Requires Mn(2+) as cofactor.

The catalysed reaction is NAD(+) + (deoxyribonucleotide)n-3'-hydroxyl + 5'-phospho-(deoxyribonucleotide)m = (deoxyribonucleotide)n+m + AMP + beta-nicotinamide D-nucleotide.. Functionally, DNA ligase that catalyzes the formation of phosphodiester linkages between 5'-phosphoryl and 3'-hydroxyl groups in double-stranded DNA using NAD as a coenzyme and as the energy source for the reaction. It is essential for DNA replication and repair of damaged DNA. The sequence is that of DNA ligase from Beijerinckia indica subsp. indica (strain ATCC 9039 / DSM 1715 / NCIMB 8712).